The primary structure comprises 811 residues: E3 ubiquitin-protein ligase RNF10 (811 aa).

The segment covering 1-10 has biased composition (polar residues); sequence MPLSSPNAAA. The disordered stretch occupies residues 1–119; sequence MPLSSPNAAA…SFNGGRRDEV (119 aa). At S5 the chain carries Phosphoserine. 3 stretches are compositionally biased toward low complexity: residues 18–31, 78–90, and 104–113; these read NSGS…SGSS, NNQS…QKSK, and SKLFSSSFNG. The tract at residues 101 to 185 is interaction with MEOX2; that stretch reads GGSSKLFSSS…FNKELFLQAN (85 aa). Phosphoserine occurs at positions 110 and 128. The RING-type zinc finger occupies 225–267; it reads CPICLYPPTAAKITRCGHIFCWACILHYLSLSEKTWSKCPICY. The span at 653–662 shows a compositional bias: polar residues; the sequence is DSALGPTSTE. Disordered regions lie at residues 653-672, 724-761, and 776-811; these read DSAL…ISPL, DVWP…VPSF, and LDTP…VHTK. The span at 724-736 shows a compositional bias: basic and acidic residues; it reads DVWPKTAPKKDEN. The span at 802 to 811 shows a compositional bias: polar residues; it reads LFSTSVVHTK.

It belongs to the RNF10 family. Interacts with MEOX2.

Its subcellular location is the cytoplasm. It is found in the nucleus. The enzyme catalyses S-ubiquitinyl-[E2 ubiquitin-conjugating enzyme]-L-cysteine + [acceptor protein]-L-lysine = [E2 ubiquitin-conjugating enzyme]-L-cysteine + N(6)-ubiquitinyl-[acceptor protein]-L-lysine.. It participates in protein modification; protein ubiquitination. In terms of biological role, E3 ubiquitin-protein ligase that catalyzes monoubiquitination of 40S ribosomal proteins RPS2/us5 and RPS3/us3 in response to ribosome stalling. Part of a ribosome quality control that takes place when ribosomes have stalled during translation initiation (iRQC): RNF10 acts by mediating monoubiquitination of RPS2/us5 and RPS3/us3, promoting their degradation by the proteasome. Also promotes ubiquitination of 40S ribosomal proteins in response to ribosome stalling during translation elongation. The action of RNF10 in iRQC is counteracted by USP10. May also act as a transcriptional factor involved in the regulation of MAG (Myelin-associated glycoprotein) expression. Acts as a regulator of Schwann cell differentiation and myelination. This chain is E3 ubiquitin-protein ligase RNF10, found in Homo sapiens (Human).